The chain runs to 706 residues: Protein MAM3 (706 aa).

Over 1–16 (MSFLPLRSRSRSGAPH) the chain is Vacuolar. A helical membrane pass occupies residues 17-37 (WVYIILYHIFTIPKIYSLPLL). Over 38-65 (SGSHVLNSRDVADSGHSVGDEASVTTYY) the chain is Cytoplasmic. A CNNM transmembrane domain is found at 57–240 (DEASVTTYYI…MGVERLTKDE (184 aa)). A helical transmembrane segment spans residues 66-86 (IISIILVLLGGVFAGLTLGLM). Over 87–120 (GQDEVYLKVISTSGSNSEKKLAKRVLDLISRGKH) the chain is Vacuolar. A helical membrane pass occupies residues 121 to 141 (WVLVTLLLSNVITNETLPIVL). Residues 142–145 (DRCL) are Cytoplasmic-facing. Residues 146–166 (GGGWQAVVSSTILIVIFGEII) form a helical membrane-spanning segment. Topologically, residues 167-177 (PQSVCVKYGLQ) are vacuolar. Residues 178 to 198 (VGAFFCPFVLVLMYLMYPVAY) form a helical membrane-spanning segment. Topologically, residues 199–706 (PIATLLDYML…ANGSSSTIKR (508 aa)) are cytoplasmic. 2 CBS domains span residues 259–320 (MTPI…DCLP) and 321–386 (ISHF…IVDE). 3 disordered regions span residues 421-495 (SHKE…ASNP), 515-540 (ITTH…LSAE), and 557-597 (LHTQ…ENQN). Over residues 433–445 (ESSPLLSPSNSNH) the composition is skewed to low complexity. Phosphoserine is present on residues serine 439 and serine 447. Residues 472 to 495 (AVLSPTPQVTEHGTIIPSNLASNP) show a composition bias toward polar residues. A Phosphoserine modification is found at serine 527. The segment covering 566-575 (TQVTTSTKTT) has biased composition (low complexity). A compositionally biased stretch (polar residues) spans 576-597 (RNSPDSISIPNSGANHGNENQN). Residue serine 603 is modified to Phosphoserine. Tyrosine 604 is modified (phosphotyrosine). Threonine 607 is subject to Phosphothreonine. The residue at position 614 (serine 614) is a Phosphoserine. The interval 626 to 706 (IGPAKDWDES…ANGSSSTIKR (81 aa)) is disordered. The segment covering 630–639 (KDWDESKSEY) has biased composition (basic and acidic residues). Residues 658 to 680 (SSSNASLFSSIKNKFKNENANNN) show a composition bias toward low complexity. Residues 681-706 (DRSNFTDSLSRTSNYDANGSSSTIKR) show a composition bias toward polar residues.

The protein belongs to the ACDP family.

Its subcellular location is the vacuole membrane. Functionally, involved in metal homeostasis and more specially in manganese sensitivity. This is Protein MAM3 (MAM3) from Saccharomyces cerevisiae (strain ATCC 204508 / S288c) (Baker's yeast).